The following is a 447-amino-acid chain: NADH-ubiquinone oxidoreductase chain 4 (447 aa).

Transmembrane regions (helical) follow at residues Ile28–Ile48, Met56–Ser76, Phe89–Val109, Phe110–Trp130, Val141–Ile161, Leu183–Leu203, Pro213–Leu233, Tyr246–Leu266, Ala273–Met293, Leu298–Leu318, Leu331–Leu351, Ile374–Ala394, and Tyr409–Leu431.

This sequence belongs to the complex I subunit 4 family.

Its subcellular location is the mitochondrion membrane. It catalyses the reaction a ubiquinone + NADH + 5 H(+)(in) = a ubiquinol + NAD(+) + 4 H(+)(out). Core subunit of the mitochondrial membrane respiratory chain NADH dehydrogenase (Complex I) that is believed to belong to the minimal assembly required for catalysis. Complex I functions in the transfer of electrons from NADH to the respiratory chain. The immediate electron acceptor for the enzyme is believed to be ubiquinone. This chain is NADH-ubiquinone oxidoreductase chain 4 (mt:ND4), found in Anopheles gambiae (African malaria mosquito).